The primary structure comprises 2646 residues: Probable helicase senataxin (2646 aa).

The residue at position 102 (serine 102) is a Phosphoserine. A Glycyl lysine isopeptide (Lys-Gly) (interchain with G-Cter in SUMO1) cross-link involves residue lysine 339. Serine 640 bears the Phosphoserine mark. Disordered regions lie at residues 705 to 734 and 825 to 876; these read KISA…WGCD and GGAL…DDED. The span at 714 to 727 shows a compositional bias: polar residues; the sequence is ESSSYAPSNSTSRN. The segment covering 867–876 has biased composition (acidic residues); sequence LDNSSSDDED. Phosphoserine is present on residues serine 870, serine 871, serine 872, serine 938, serine 1002, and serine 1004. Positions 1001–1023 are disordered; it reads ISDSDEEEDEDEDERSSSEENIK. Over residues 1003–1014 the composition is skewed to acidic residues; it reads DSDEEEDEDEDE. Residue lysine 1051 forms a Glycyl lysine isopeptide (Lys-Gly) (interchain with G-Cter in SUMO2) linkage. Residues 1122 to 1133 are compositionally biased toward basic and acidic residues; that stretch reads RNKAEGVKEHAG. The tract at residues 1122–1245 is disordered; that stretch reads RNKAEGVKEH…DTRRGQSKSS (124 aa). Over residues 1147–1156 the composition is skewed to basic residues; the sequence is GVKKPKRKRY. Basic and acidic residues predominate over residues 1176-1189; the sequence is LPDRRDLTESDLKS. Polar residues predominate over residues 1196–1211; it reads TPSSSVERDSTILQKS. A compositionally biased stretch (basic residues) spans 1212–1222; it reads TKSRTHSKPVR. The residue at position 1318 (serine 1318) is a Phosphoserine. Residues lysine 1328, lysine 1329, and lysine 1398 each participate in a glycyl lysine isopeptide (Lys-Gly) (interchain with G-Cter in SUMO2) cross-link. Serine 1472 is subject to Phosphoserine. Threonine 1474 bears the Phosphothreonine mark. Residues 1591 to 1627 are disordered; the sequence is LSKSLESTTLQQSALKNKSSGAQPNLKVTPPSSMGSQ. The segment covering 1595 to 1613 has biased composition (polar residues); the sequence is LESTTLQQSALKNKSSGAQ. An ATP-binding site is contributed by 1939-1946; that stretch reads GPPGTGKS. Residues 2046 to 2063 carry the Bipartite nuclear localization signal motif; it reads KKDLPSHIQEMLRRKEIL. Threonine 2450 is subject to Phosphothreonine. 3 disordered regions span residues 2450-2472, 2486-2506, and 2569-2624; these read THPP…NRLD, HTPS…QDRL, and SHRS…THHV. 2 stretches are compositionally biased toward basic and acidic residues: residues 2496-2506 and 2593-2608; these read GPERPLLQDRL and KYSD…REPR. Positions 2632–2646 are necessary for nuclear localization; the sequence is RRRLDDSSAKRRQFL.

Belongs to the DNA2/NAM7 helicase family. Homodimer. Interacts with PER2; the interaction inhibits termination of circadian target genes. Interacts with CHD4, POLR2A, PRKDC and TRIM28. Interacts with UBE2I. Interacts (via N-terminus domain) with EXOSC9 (via C-terminus region); the interaction enhances SETX sumoylation. Interacts with NCL (via N-terminus domain). Interacts with PABPN1, PABPC1 and SF3B1. Interacts with SMN1/SMN2 and POLR2A; SMN1/SMN2 recruits SETX to POLR2A. Ubiquitinated. Post-translationally, sumoylated preferentially with SUMO2 or SUMO3. As to expression, expressed in cerebellum, hippocampus, olfactory bulb, Bergmann glial fibers, stellate cells and Purkinje cells. Expressed in the epithelial cells of the lens but not in mature lens fiber cells. Expressed in the retina (highly expressed in inner and outer segments of photoreceptors and outer plexiform layer cells but weakly expressed in the inner plexiform and ganglion cell layers). Expressed in the kidney.

The protein localises to the nucleus. Its subcellular location is the nucleoplasm. The protein resides in the nucleolus. It is found in the cytoplasm. It localises to the chromosome. The protein localises to the telomere. Its subcellular location is the cell projection. The protein resides in the axon. It is found in the growth cone. Probable RNA/DNA helicase involved in diverse aspects of RNA metabolism and genomic integrity. Plays a role in transcription regulation by its ability to modulate RNA Polymerase II (Pol II) binding to chromatin and through its interaction with proteins involved in transcription. Contributes to the mRNA splicing efficiency and splice site selection. Required for the resolution of R-loop RNA-DNA hybrid formation at G-rich pause sites located downstream of the poly(A) site, allowing XRN2 recruitment and XRN2-mediated degradation of the downstream cleaved RNA and hence efficient RNA polymerase II (RNAp II) transcription termination. Required for the 3' transcriptional termination of PER1 and CRY2, thus playing an important role in the circadian rhythm regulation. Involved in DNA double-strand breaks damage response generated by oxidative stress. In association with RRP45, targets the RNA exosome complex to sites of transcription-induced DNA damage. Plays a role in the development and maturation of germ cells: essential for male meiosis, acting at the interface of transcription and meiotic recombination, and in the process of gene silencing during meiotic sex chromosome inactivation (MSCI). Plays a role in neurite outgrowth in hippocampal cells through FGF8-activated signaling pathways. Inhibits retinoic acid-induced apoptosis. May be involved in telomeric stability through the regulation of telomere repeat-containing RNA (TERRA) transcription. In Mus musculus (Mouse), this protein is Probable helicase senataxin.